Consider the following 604-residue polypeptide: Arginine--tRNA ligase (604 aa).

The 'HIGH' region signature appears at 142-152 (PNIAKEMHVGH).

It belongs to the class-I aminoacyl-tRNA synthetase family. In terms of assembly, monomer.

The protein resides in the cytoplasm. It catalyses the reaction tRNA(Arg) + L-arginine + ATP = L-arginyl-tRNA(Arg) + AMP + diphosphate. The chain is Arginine--tRNA ligase from Prochlorococcus marinus (strain MIT 9312).